The following is a 467-amino-acid chain: 2-succinylbenzoate--CoA ligase (467 aa).

Belongs to the ATP-dependent AMP-binding enzyme family. MenE subfamily.

It catalyses the reaction 2-succinylbenzoate + ATP + CoA = 2-succinylbenzoyl-CoA + AMP + diphosphate. Its pathway is quinol/quinone metabolism; 1,4-dihydroxy-2-naphthoate biosynthesis; 1,4-dihydroxy-2-naphthoate from chorismate: step 5/7. It functions in the pathway quinol/quinone metabolism; menaquinone biosynthesis. In terms of biological role, converts 2-succinylbenzoate (OSB) to 2-succinylbenzoyl-CoA (OSB-CoA). The protein is 2-succinylbenzoate--CoA ligase of Listeria innocua serovar 6a (strain ATCC BAA-680 / CLIP 11262).